Here is a 445-residue protein sequence, read N- to C-terminus: Methionine aminopeptidase 2 (445 aa).

Residues 1–76 (MAAQVASGVG…KKKCTSKVQT (76 aa)) are disordered. The segment covering 57-71 (AKKKKKKTKKKKKCT) has biased composition (basic residues). Position 195 (histidine 195) interacts with substrate. A divalent metal cation contacts are provided by aspartate 215, aspartate 226, and histidine 295. Histidine 303 is a binding site for substrate. Residues glutamate 331 and glutamate 426 each contribute to the a divalent metal cation site.

This sequence belongs to the peptidase M24A family. Methionine aminopeptidase eukaryotic type 2 subfamily. Requires Co(2+) as cofactor. It depends on Zn(2+) as a cofactor. Mn(2+) serves as cofactor. Fe(2+) is required as a cofactor.

It is found in the cytoplasm. The catalysed reaction is Release of N-terminal amino acids, preferentially methionine, from peptides and arylamides.. In terms of biological role, cotranslationally removes the N-terminal methionine from nascent proteins. The N-terminal methionine is often cleaved when the second residue in the primary sequence is small and uncharged (Met-Ala-, Cys, Gly, Pro, Ser, Thr, or Val). This is Methionine aminopeptidase 2 from Paracoccidioides lutzii (strain ATCC MYA-826 / Pb01) (Paracoccidioides brasiliensis).